Consider the following 167-residue polypeptide: I-Kappa-B like protein I1 (167 aa).

ANK repeat units follow at residues 54 to 86 (HGKQCVHIVSNPGIADPQEKLKLLMEWGADING), 91 to 121 (FGNTPLHIAAYTQNHKLATWLCNQPGINMGI), and 125 to 154 (LFKTPYYVACERHDIKIMNILRAKGGQCRI).

Belongs to the polydnaviridae I-Kappa-B-like protein family.

Functionally, suppresses the host immune response through NF-kappa-B inactivation. Possesses ankyrin repeat domains required for NF-kappa-B binding but lacks the regulatory regions required for dissociation from NF-kappa-B and degradation. Therefore, prevents host NF-kappa-B release and subsequent activation. This chain is I-Kappa-B like protein I1 (I1), found in Microplitis demolitor (Parasitoid wasp).